The following is a 330-amino-acid chain: Methionyl-tRNA formyltransferase (330 aa).

Residue 116-119 coordinates (6S)-5,6,7,8-tetrahydrofolate; it reads SLLP.

Belongs to the Fmt family.

The enzyme catalyses L-methionyl-tRNA(fMet) + (6R)-10-formyltetrahydrofolate = N-formyl-L-methionyl-tRNA(fMet) + (6S)-5,6,7,8-tetrahydrofolate + H(+). In terms of biological role, attaches a formyl group to the free amino group of methionyl-tRNA(fMet). The formyl group appears to play a dual role in the initiator identity of N-formylmethionyl-tRNA by promoting its recognition by IF2 and preventing the misappropriation of this tRNA by the elongation apparatus. This Nitratidesulfovibrio vulgaris (strain ATCC 29579 / DSM 644 / CCUG 34227 / NCIMB 8303 / VKM B-1760 / Hildenborough) (Desulfovibrio vulgaris) protein is Methionyl-tRNA formyltransferase.